Reading from the N-terminus, the 160-residue chain is Cytochrome c-type biogenesis protein CcmE (160 aa).

Residues M1 to R8 lie on the Cytoplasmic side of the membrane. The helical; Signal-anchor for type II membrane protein transmembrane segment at L9–A29 threads the bilayer. Residues L30–Q160 lie on the Periplasmic side of the membrane. Heme-binding residues include H128 and Y132.

The protein belongs to the CcmE/CycJ family.

Its subcellular location is the cell inner membrane. Its function is as follows. Heme chaperone required for the biogenesis of c-type cytochromes. Transiently binds heme delivered by CcmC and transfers the heme to apo-cytochromes in a process facilitated by CcmF and CcmH. In Vibrio cholerae serotype O1 (strain ATCC 39541 / Classical Ogawa 395 / O395), this protein is Cytochrome c-type biogenesis protein CcmE.